A 572-amino-acid polypeptide reads, in one-letter code: Urease subunit alpha (572 aa).

One can recognise a Urease domain in the interval 131–572 (GGIDAHIHFI…LPLAQRYFLF (442 aa)). Residues H136, H138, and K219 each contribute to the Ni(2+) site. At K219 the chain carries N6-carboxylysine. Position 221 (H221) interacts with substrate. Residues H248 and H274 each contribute to the Ni(2+) site. H322 (proton donor) is an active-site residue. D362 is a Ni(2+) binding site.

The protein belongs to the metallo-dependent hydrolases superfamily. Urease alpha subunit family. As to quaternary structure, heterotrimer of UreA (gamma), UreB (beta) and UreC (alpha) subunits. Three heterotrimers associate to form the active enzyme. The cofactor is Ni cation. Post-translationally, carboxylation allows a single lysine to coordinate two nickel ions.

The protein localises to the cytoplasm. It catalyses the reaction urea + 2 H2O + H(+) = hydrogencarbonate + 2 NH4(+). The protein operates within nitrogen metabolism; urea degradation; CO(2) and NH(3) from urea (urease route): step 1/1. The chain is Urease subunit alpha from Thermosynechococcus vestitus (strain NIES-2133 / IAM M-273 / BP-1).